An 898-amino-acid polypeptide reads, in one-letter code: Protein translocase subunit SecA (898 aa).

ATP is bound by residues glutamine 87, 105 to 109, and aspartate 512; that span reads GEGKT. Polar residues predominate over residues 855-865; it reads MQYQNNEGTSS. Positions 855–898 are disordered; that stretch reads MQYQNNEGTSSLHEKSEHKIGRNESCPCGSGKKYKHCHGSKAKY. The segment covering 866 to 876 has biased composition (basic and acidic residues); it reads LHEKSEHKIGR. The Zn(2+) site is built by cysteine 880, cysteine 882, cysteine 891, and histidine 892. Over residues 886-898 the composition is skewed to basic residues; it reads KKYKHCHGSKAKY.

This sequence belongs to the SecA family. As to quaternary structure, monomer and homodimer. Part of the essential Sec protein translocation apparatus which comprises SecA, SecYEG and auxiliary proteins SecDF-YajC and YidC. Requires Zn(2+) as cofactor.

The protein localises to the cell inner membrane. It localises to the cytoplasm. The enzyme catalyses ATP + H2O + cellular proteinSide 1 = ADP + phosphate + cellular proteinSide 2.. Its function is as follows. Part of the Sec protein translocase complex. Interacts with the SecYEG preprotein conducting channel. Has a central role in coupling the hydrolysis of ATP to the transfer of proteins into and across the cell membrane, serving both as a receptor for the preprotein-SecB complex and as an ATP-driven molecular motor driving the stepwise translocation of polypeptide chains across the membrane. The chain is Protein translocase subunit SecA from Histophilus somni (strain 129Pt) (Haemophilus somnus).